The following is a 136-amino-acid chain: UPF0310 protein HH_1062 (136 aa).

The protein belongs to the UPF0310 family.

The polypeptide is UPF0310 protein HH_1062 (Helicobacter hepaticus (strain ATCC 51449 / 3B1)).